We begin with the raw amino-acid sequence, 124 residues long: Small ribosomal subunit protein uS12 (124 aa).

The segment at Met-1–Pro-42 is disordered. Residue Asp-89 is modified to 3-methylthioaspartic acid. The segment at Ala-105 to Glu-124 is disordered. Basic residues predominate over residues Gly-113–Glu-124.

Belongs to the universal ribosomal protein uS12 family. Part of the 30S ribosomal subunit. Contacts proteins S8 and S17. May interact with IF1 in the 30S initiation complex.

With S4 and S5 plays an important role in translational accuracy. Functionally, interacts with and stabilizes bases of the 16S rRNA that are involved in tRNA selection in the A site and with the mRNA backbone. Located at the interface of the 30S and 50S subunits, it traverses the body of the 30S subunit contacting proteins on the other side and probably holding the rRNA structure together. The combined cluster of proteins S8, S12 and S17 appears to hold together the shoulder and platform of the 30S subunit. The chain is Small ribosomal subunit protein uS12 from Salinibacter ruber (strain DSM 13855 / M31).